A 291-amino-acid polypeptide reads, in one-letter code: Porphobilinogen deaminase (291 aa).

Residue C237 is modified to S-(dipyrrolylmethanemethyl)cysteine.

It belongs to the HMBS family. As to quaternary structure, monomer. The cofactor is dipyrromethane.

It carries out the reaction 4 porphobilinogen + H2O = hydroxymethylbilane + 4 NH4(+). The protein operates within porphyrin-containing compound metabolism; protoporphyrin-IX biosynthesis; coproporphyrinogen-III from 5-aminolevulinate: step 2/4. Tetrapolymerization of the monopyrrole PBG into the hydroxymethylbilane pre-uroporphyrinogen in several discrete steps. In Clostridium perfringens (strain SM101 / Type A), this protein is Porphobilinogen deaminase.